A 411-amino-acid polypeptide reads, in one-letter code: Glycogen synthase kinase-3 homolog MsK-2 (411 aa).

The 285-residue stretch at 74–358 (YMAERAVGQG…ALEALVHPFF (285 aa)) folds into the Protein kinase domain. ATP is bound by residues 80–88 (VGQGSFGVV) and Lys-103. Residue Asp-199 is the Proton acceptor of the active site. A Phosphotyrosine modification is found at Tyr-234.

The protein belongs to the protein kinase superfamily. CMGC Ser/Thr protein kinase family. GSK-3 subfamily. Absent in leaves and petioles while a moderate expression is seen in the stems, roots, and nodes.

It catalyses the reaction L-seryl-[protein] + ATP = O-phospho-L-seryl-[protein] + ADP + H(+). The catalysed reaction is L-threonyl-[protein] + ATP = O-phospho-L-threonyl-[protein] + ADP + H(+). This chain is Glycogen synthase kinase-3 homolog MsK-2 (MSK-2), found in Medicago sativa (Alfalfa).